The chain runs to 396 residues: Serpin-ZXA (396 aa).

Positions 343 to 367 (GTEAAAATAAVITLRSAPIAEDFVA) are RCL.

This sequence belongs to the serpin family.

In terms of biological role, probable serine protease inhibitor. The sequence is that of Serpin-ZXA from Oryza sativa subsp. japonica (Rice).